We begin with the raw amino-acid sequence, 71 residues long: ATP synthase subunit c (71 aa).

The next 2 helical transmembrane spans lie at 4-24 and 48-68; these read AVIG…GIGI and IIGA…AFMI.

The protein belongs to the ATPase C chain family. F-type ATPases have 2 components, F(1) - the catalytic core - and F(0) - the membrane proton channel. F(1) has five subunits: alpha(3), beta(3), gamma(1), delta(1), epsilon(1). F(0) has three main subunits: a(1), b(2) and c(10-14). The alpha and beta chains form an alternating ring which encloses part of the gamma chain. F(1) is attached to F(0) by a central stalk formed by the gamma and epsilon chains, while a peripheral stalk is formed by the delta and b chains.

The protein resides in the cell membrane. Its function is as follows. F(1)F(0) ATP synthase produces ATP from ADP in the presence of a proton or sodium gradient. F-type ATPases consist of two structural domains, F(1) containing the extramembraneous catalytic core and F(0) containing the membrane proton channel, linked together by a central stalk and a peripheral stalk. During catalysis, ATP synthesis in the catalytic domain of F(1) is coupled via a rotary mechanism of the central stalk subunits to proton translocation. In terms of biological role, key component of the F(0) channel; it plays a direct role in translocation across the membrane. A homomeric c-ring of between 10-14 subunits forms the central stalk rotor element with the F(1) delta and epsilon subunits. This chain is ATP synthase subunit c, found in Clostridium botulinum (strain Alaska E43 / Type E3).